The sequence spans 708 residues: Kelch-like protein 11 (708 aa).

Residues 1–15 (MAAAAVAAAAAAAAA) form the signal peptide. The segment at 47 to 70 (DFGPGPGISAMEASGGDPGPEAED) is disordered. The region spanning 94–170 (CDITLCFGGA…MYTGRIRVST (77 aa)) is the BTB domain. Residues 205-307 (CVAIHSLAHM…KPTYLTRHVK (103 aa)) enclose the BACK domain. Kelch repeat units follow at residues 360-407 (VIMV…VTES), 408-453 (YVYV…EVKG), 455-501 (LYSI…AIED), 503-556 (FVYI…VVNS), and 610-661 (DVFI…HVRI). Position 465 is a phosphoserine (Ser465).

Component of a cullin-RING-based BCR (BTB-CUL3-RBX1) E3 ubiquitin-protein ligase complex. Homodimer. Interacts with CUL3.

Its function is as follows. Component of a cullin-RING-based BCR (BTB-CUL3-RBX1) E3 ubiquitin-protein ligase complex that mediates the ubiquitination of target proteins, leading most often to their proteasomal degradation. The protein is Kelch-like protein 11 (KLHL11) of Homo sapiens (Human).